Consider the following 131-residue polypeptide: Fumarate reductase subunit C (131 aa).

Transmembrane regions (helical) follow at residues 30-50, 63-83, and 109-129; these read EGTAVPAVWFSIELIFGLFAL, FLQNPVIVIINLITLAAALLH, and IIKSLWAVTVVATIVILFVAL.

This sequence belongs to the FrdC family. In terms of assembly, part of an enzyme complex containing four subunits: a flavoprotein (FrdA), an iron-sulfur protein (FrdB), and two hydrophobic anchor proteins (FrdC and FrdD).

The protein localises to the cell inner membrane. In terms of biological role, two distinct, membrane-bound, FAD-containing enzymes are responsible for the catalysis of fumarate and succinate interconversion; fumarate reductase is used in anaerobic growth, and succinate dehydrogenase is used in aerobic growth. Anchors the catalytic components of the fumarate reductase complex to the cell inner membrane, binds quinones. The chain is Fumarate reductase subunit C from Escherichia coli O17:K52:H18 (strain UMN026 / ExPEC).